We begin with the raw amino-acid sequence, 378 residues long: N-acetyllactosaminide beta-1,3-N-acetylglucosaminyltransferase 4 (378 aa).

Residues 1 to 28 (MLPPQPSAAHQGRGGRSGLLPKGPAMLC) lie on the Cytoplasmic side of the membrane. A helical; Signal-anchor for type II membrane protein transmembrane segment spans residues 29–49 (RLCWLVSYSLAVLLLGCLLFL). The Lumenal portion of the chain corresponds to 50–378 (RKAAKPAGDP…KCAAGPIPQR (329 aa)). The disordered stretch occupies residues 59 to 81 (PTAHQPFWAPPTPRHSRCPPNHT). N-linked (GlcNAc...) asparagine glycosylation occurs at Asn192.

It belongs to the glycosyltransferase 31 family. Mainly expressed in brain tissues such as whole brain, hippocampus, amygdala, cerebellum and caudate nucleus. Also expressed in colon, esophagus and kidney.

Its subcellular location is the golgi apparatus membrane. It catalyses the reaction a beta-D-galactosyl-(1-&gt;4)-N-acetyl-beta-D-glucosaminyl derivative + UDP-N-acetyl-alpha-D-glucosamine = an N-acetyl-beta-D-glucosaminyl-(1-&gt;3)-beta-D-galactosyl-(1-&gt;4)-N-acetyl-beta-D-glucosaminyl derivative + UDP + H(+). It functions in the pathway protein modification; protein glycosylation. Beta-1,3-N-acetylglucosaminyltransferase involved in the synthesis of poly-N-acetyllactosamine. Has activity for type 2 oligosaccharides. This Homo sapiens (Human) protein is N-acetyllactosaminide beta-1,3-N-acetylglucosaminyltransferase 4 (B3GNT4).